A 354-amino-acid chain; its full sequence is 5,10-methenyltetrahydromethanopterin hydrogenase (354 aa).

The protein belongs to the HMD family.

It carries out the reaction 5,10-methenyl-5,6,7,8-tetrahydromethanopterin + H2 = 5,10-methylenetetrahydromethanopterin + H(+). The protein operates within one-carbon metabolism; methanogenesis from CO(2); 5,10-methylene-5,6,7,8-tetrahydromethanopterin from 5,10-methenyl-5,6,7,8-tetrahydromethanopterin (hydrogen route): step 1/1. In terms of biological role, catalyzes the reversible reduction of methenyl-H(4)MPT(+) to methylene-H(4)MPT. The chain is 5,10-methenyltetrahydromethanopterin hydrogenase from Methanococcus vannielii (strain ATCC 35089 / DSM 1224 / JCM 13029 / OCM 148 / SB).